Consider the following 304-residue polypeptide: Coenzyme PQQ synthesis protein B (304 aa).

Belongs to the PqqB family.

Its pathway is cofactor biosynthesis; pyrroloquinoline quinone biosynthesis. May be involved in the transport of PQQ or its precursor to the periplasm. The chain is Coenzyme PQQ synthesis protein B from Gluconobacter oxydans (strain 621H) (Gluconobacter suboxydans).